The sequence spans 440 residues: Tripartite motif-containing protein 14 (440 aa).

Residues 17 to 59 (AYGWRCPEHSERPAELFCRRCGRCVCALCPVLGAHRGHPVGLA) form a B box-type zinc finger. Residues Cys-22, His-25, Cys-45, and His-51 each contribute to the Zn(2+) site. The B30.2/SPRY domain maps to 247–440 (ALLKTSPSPE…EGPISIPRLP (194 aa)).

This sequence belongs to the TRIM/RBCC family. Interacts with MAVS. Interacts with WRNIP1 and PPP6C; these interactions positively regulate the RIG-I signaling pathway. Interacts with CGAS; this interaction stabilizes CGAS and promotes type I interferon production. Interacts with USP14; this interaction mediates the cleavage of 'Lys-48'-linked ubiquitination of CGAS. Interacts with TBK1. Interacts with SPI1. Interacts with KDM4D and USP14. Ubiquitinated. Undergoes 'Lys-63'-linked polyubiquitination; this modification allows IKBKG/NEMO recruitment to MAVS. Undergoes 'Lys-48'-linked polyubiquitination by RNF125; this modification mediates its degradation via the ubiquitin-proteasome pathway. In terms of tissue distribution, expressed with high level in spleen, thymus, liver and testis. Expressed with low level in the brain, kidney, and skeletal muscle. Expressed in various differentiation stages of B-lymphocytes.

Its subcellular location is the mitochondrion outer membrane. The protein localises to the cytoplasmic vesicle. It localises to the phagosome. Plays a role in the innate immune defense against viruses. Facilitates the type I IFN response by interacting with MAVS at the outer mitochondria membrane and thereby recruiting NF-kappa-B essential modulator IKBKG/NEMO to the MAVS signalosome, leading to the activation of both the IFN regulatory factor 3/IRF3 and NF-kappa-B pathways. Positively regulates the CGAS-induced type I interferon signaling pathway by stabilizing CGAS and inhibiting its autophagic degradation. Inhibits the transcriptional activity of SPI1 in a dose-dependent manner. Also inhibits OPTN-mediated selective autophagic degradation of KDM4D and thereby negatively regulates H3K9me2 and H3K9me3. Mechanistically, recruits USP14 to remove the 'Lys-63'-linked ubiquitination of KDM4D, preventing its recognition by OPTN and subsequent degradation. Functionally, plays an essential role in the innate immune defense against viruses and bacteria. Facilitates the type I IFN response by interacting with MAVS at the outer mitochondria membrane and thereby recruiting NF-kappa-B essential modulator IKBKG/NEMO to the MAVS signalosome, leading to the activation of both the IFN regulatory factor 3/IRF3 and NF-kappa-B pathways. Positively regulates the CGAS-induced type I interferon signaling pathway by stabilizing CGAS and inhibiting its autophagic degradation. Acts as a scaffold between TBK1 and STAT3 to promote phosphorylation of STAT3 and resolve interferon-stimulated gene (ISG) expression. Inhibits the transcriptional activity of SPI1 in a dose-dependent manner. The sequence is that of Tripartite motif-containing protein 14 (Trim14) from Mus musculus (Mouse).